The following is a 324-amino-acid chain: Galactosylgalactosylxylosylprotein 3-beta-glucuronosyltransferase 2 (324 aa).

The Cytoplasmic portion of the chain corresponds to 1–2 (MK). Residues 3-23 (SALCNRFFILLPWILIVIIML) traverse the membrane as a helical; Signal-anchor for type II membrane protein segment. Topologically, residues 24-324 (DVDPRRPAPQ…YHMDTVNIEV (301 aa)) are lumenal. The disordered stretch occupies residues 34 to 78 (LTSRPYFSPHTVGCGGSRVPLRRSSPGRDAAEKRNESRPQLQPEP). A glycan (N-linked (GlcNAc...) asparagine) is linked at Asn-68. Residue Asp-188 coordinates Mn(2+). Residue Glu-274 is the Proton acceptor of the active site. Asn-293 carries an N-linked (GlcNAc...) asparagine glycan.

It belongs to the glycosyltransferase 43 family. Homodimer. Requires Mn(2+) as cofactor. In terms of tissue distribution, expressed in the cerebral cortex, cerebellum and whole brain.

Its subcellular location is the golgi apparatus membrane. It carries out the reaction 3-O-(beta-D-galactosyl-(1-&gt;3)-beta-D-galactosyl-(1-&gt;4)-beta-D-xylosyl)-L-seryl-[protein] + UDP-alpha-D-glucuronate = 3-O-(beta-D-GlcA-(1-&gt;3)-beta-D-Gal-(1-&gt;3)-beta-D-Gal-(1-&gt;4)-beta-D-Xyl)-L-seryl-[protein] + UDP + H(+). Its pathway is protein modification; protein glycosylation. Involved in the biosynthesis of L2/HNK-1 carbohydrate epitope on both glycolipids and glycoproteins. Substrates include asialo-orosomucoid (ASOR), paragloboside (lacto-N-neotetraosylceramide), Gal-beta-1,4-GlcNAc-beta-1,3-Gal-beta-1,4-Glc-pyridylamine and Gal-beta-1,3-GlcNAc-beta-1,3-Gal-beta-1,4-Glc-pyridylamine. In Rattus norvegicus (Rat), this protein is Galactosylgalactosylxylosylprotein 3-beta-glucuronosyltransferase 2 (B3gat2).